The chain runs to 521 residues: Runt-related transcription factor 2 (521 aa).

Disordered stretches follow at residues 18–59 (FWDP…QQQQ) and 222–340 (DGPR…RRIS). Low complexity-rich tracts occupy residues 21-33 (PSTSRRFSPPSSS) and 47-59 (AAQQQQQQQQQQQ). Residues 101–229 (TMVEIIADHP…TVDGPREPRR (129 aa)) form the Runt domain. A Glycyl lysine isopeptide (Lys-Gly) (interchain with G-Cter in SUMO2) cross-link involves residue K238. Residues 242-258 (FSDRLSDLGRIPHPSMR) are required for interaction with FOXO1. At R267 the chain carries Asymmetric dimethylarginine. A compositionally biased stretch (polar residues) spans 267 to 326 (RPSLNSAPSPFNPQGQSQITDPRQAQSSPPWSYDQSYPSYLSQMTSPSIHSTTPLSSTRG). The interval 336-439 (PRRISDDDTA…SQSQSGPFQT (104 aa)) is interaction with KAT6A. S340 is modified (phosphoserine). The interval 374–468 (RQFPSISSLT…VPGGDRSPSR (95 aa)) is interaction with KAT6B. S451 is subject to Phosphoserine; by CDK1. Positions 460-521 (PGGDRSPSRM…RMDESVWRPY (62 aa)) are disordered. Composition is skewed to polar residues over residues 473-492 (CTTTSNGSTLLNPNLPNQND) and 499-511 (SHSSSPTVLNSSG). A compositionally biased stretch (basic and acidic residues) spans 512 to 521 (RMDESVWRPY).

As to quaternary structure, heterodimer of an alpha and a beta subunit. The alpha subunit binds DNA as a monomer and through the Runt domain. DNA-binding is increased by heterodimerization. Interacts with XRCC6 (Ku70) and XRCC5 (Ku80). Interacts with HIVEP3. Interacts with IFI204. Interaction with SATB2; the interaction results in enhanced DNA binding and transactivation by these transcription factors. Binds to HIPK3. Interacts with FOXO1 (via a C-terminal region); the interaction inhibits RUNX2 transcriptional activity towards BGLAP. This interaction is prevented on insulin or IGF1 stimulation as FOXO1 is exported from the nucleus. Interacts with CCNB1, KAT6A and KAT6B. Interacts with FOXP3. Interacts with TMEM119. Interacts with OLFM2. Interacts with IPO7; the interaction inhibits RUNX2 nuclear translocation in osteoblasts. In terms of assembly, interacts with DDX5. Phosphorylated; probably by MAP kinases (MAPK). Phosphorylation by HIPK3 is required for the SPEN/MINT and FGF2 transactivation during osteoblastic differentiation. Phosphorylation at Ser-451 by CDK1 promotes endothelial cell proliferation required for tumor angiogenesis probably by facilitating cell cycle progression. Isoform 3 is phosphorylated on Ser-340. As to expression, specifically expressed in osteoblasts.

It localises to the nucleus. It is found in the cytoplasm. Functionally, transcription factor involved in osteoblastic differentiation and skeletal morphogenesis. Essential for the maturation of osteoblasts and both intramembranous and endochondral ossification. CBF binds to the core site, 5'-PYGPYGGT-3', of a number of enhancers and promoters, including murine leukemia virus, polyomavirus enhancer, T-cell receptor enhancers, osteocalcin, osteopontin, bone sialoprotein, alpha 1(I) collagen, LCK, IL-3 and GM-CSF promoters. In osteoblasts, supports transcription activation: synergizes with SPEN/MINT to enhance FGFR2-mediated activation of the osteocalcin FGF-responsive element (OCFRE). Inhibits KAT6B-dependent transcriptional activation. This chain is Runt-related transcription factor 2 (RUNX2), found in Homo sapiens (Human).